A 183-amino-acid polypeptide reads, in one-letter code: Ribonuclease H (183 aa).

An RNase H type-1 domain is found at 2 to 151 (SQARFIAFSD…VDQLAQAAAR (150 aa)). Residues aspartate 11, glutamate 57, aspartate 79, and aspartate 143 each coordinate Mg(2+).

It belongs to the RNase H family. In terms of assembly, monomer. Requires Mg(2+) as cofactor.

It is found in the cytoplasm. It carries out the reaction Endonucleolytic cleavage to 5'-phosphomonoester.. Endonuclease that specifically degrades the RNA of RNA-DNA hybrids. The sequence is that of Ribonuclease H from Anaeromyxobacter dehalogenans (strain 2CP-C).